The chain runs to 232 residues: MEHAILVIATRNKGKSREIGKYLEHFPVEVRDLNDFGPIPEVVEDGATFEENAYKKALLTARVLGLPALADDSGLEVAALGGAPGIHSARYAGPDASDAANNEKLLAALSGVEDRAARFCCVLSLAVPSGPALTYEAFCEGTILTAPRGDNGFGYDPLFHYAPAGKTFAEMSLDEKAKVSHRGRALLELQREFDQVLKWLHARTADENLRRGVGHDMCVTGEDPRGTEPKME.

10 to 15 (TRNKGK) provides a ligand contact to substrate. The active-site Proton acceptor is the aspartate 72. Aspartate 72 is a Mg(2+) binding site. Substrate-binding positions include serine 73, 153–156 (FGYD), lysine 176, and 181–182 (HR).

It belongs to the HAM1 NTPase family. In terms of assembly, homodimer. Requires Mg(2+) as cofactor.

It catalyses the reaction XTP + H2O = XMP + diphosphate + H(+). The catalysed reaction is dITP + H2O = dIMP + diphosphate + H(+). The enzyme catalyses ITP + H2O = IMP + diphosphate + H(+). Its function is as follows. Pyrophosphatase that catalyzes the hydrolysis of nucleoside triphosphates to their monophosphate derivatives, with a high preference for the non-canonical purine nucleotides XTP (xanthosine triphosphate), dITP (deoxyinosine triphosphate) and ITP. Seems to function as a house-cleaning enzyme that removes non-canonical purine nucleotides from the nucleotide pool, thus preventing their incorporation into DNA/RNA and avoiding chromosomal lesions. The polypeptide is dITP/XTP pyrophosphatase (Syntrophobacter fumaroxidans (strain DSM 10017 / MPOB)).